Reading from the N-terminus, the 590-residue chain is PWWP domain-containing protein 2B (590 aa).

Disordered stretches follow at residues 52–110, 182–347, 360–398, and 426–467; these read APLP…PPLP, KSTL…EHEP, YLRDSSPAPCADGPAGGLADLSSGSSGEDDDFKSCPQGP, and DSLD…TVPP. Serine 84 carries the phosphoserine modification. A compositionally biased stretch (pro residues) spans 99 to 110; sequence PEPPPPLVPPLP. Residues serine 186 and serine 206 each carry the phosphoserine modification. A compositionally biased stretch (basic and acidic residues) spans 208–217; sequence PDRELRKPEE. Serine 250 carries the phosphoserine modification. The segment covering 296–305 has biased composition (basic and acidic residues); it reads VLDRESRDRP. The span at 376-385 shows a compositional bias: low complexity; sequence GLADLSSGSS. At serine 447 the chain carries Phosphoserine. The 61-residue stretch at 490-550 folds into the PWWP domain; sequence VGDIVWGKIH…ISKLSPFSEF (61 aa).

In terms of assembly, component of a MTA1-specific subcomplex of the NuRD complex composed of PWWP2B, MTA1 and HDAC1 but does not contain CHD4 and MBD3. Interacts with MTA1 and HDAC1. Interacts with MTA2, MTA3, HDAC2, RBBP4, RBBP7, BRCC3 and ZNF516. Does not interact with CHD4 and MBD3. In terms of processing, deubiquitinated by BRCC3; leading to its stabilization.

Chromatin-binding protein that acts as an adapter between distinct nucleosome components (H3K36me3 or H2A.Z) and chromatin-modifying complexes, contributing to the regulation of the levels of histone acetylation at actively transcribed genes. Competes with CHD4 and MBD3 for interaction with MTA1 to form a NuRD subcomplex, preventing the formation of full NuRD complex (containing CHD4 and MBD3), leading to recruitment of HDACs to gene promoters resulting in turn in the deacetylation of nearby H3K27 and H2A.Z. Plays a role in facilitating transcriptional elongation through regulation of histone acetylation. Negatively regulates brown adipocyte thermogenesis by interacting with and stabilizing HDAC1 at the UCP1 gene promoter, thereby promoting histone deacetylation at the promoter leading to the repression of UCP1 expression. The polypeptide is PWWP domain-containing protein 2B (PWWP2B) (Homo sapiens (Human)).